A 771-amino-acid polypeptide reads, in one-letter code: Endoplasmin homolog (771 aa).

A signal peptide spans 1 to 24 (MANSSLLRVVLVALLLLGSVTVSA). The ATP site is built by N63, D109, and F160. N63 is a glycosylation site (N-linked (GlcNAc...) asparagine). Residues 254–282 (AATPESAAEERSLDEGAVEEDPDKEGDTQ) form a disordered region. N306 and N402 each carry an N-linked (GlcNAc...) asparagine glycan. A disordered region spans residues 727–771 (ADDSLLPPDDAEYTVSDTETEEEEEQPKVDTNAHEEAETDGEGDL). Residues 752 to 762 (QPKVDTNAHEE) are compositionally biased toward basic and acidic residues. Positions 768 to 771 (EGDL) match the Prevents secretion from ER motif.

The protein belongs to the heat shock protein 90 family. As to quaternary structure, homotetramer.

The protein localises to the endoplasmic reticulum. Its function is as follows. Molecular chaperone that functions in the processing and transport of secreted proteins. Required for the synthesis of lipophosphoglycan (LPG), a cell surface glycoconjugate. Necessary for the attachment of the galactosyl residue to the mannose within the phosphoglycan repeats of the nascent LPG chain. Also required for addition of phosphoglycan to acid phosphatase. Not required for normal growth. Has ATPase activity. Binds heparin with micromolar affinity which may facilitate infection of host cells. The chain is Endoplasmin homolog from Leishmania donovani.